Here is a 161-residue protein sequence, read N- to C-terminus: Periplasmic chaperone Spy (161 aa).

Positions 1-23 (MRKLTALFVASTLALGAANLAHA) are cleaved as a signal peptide. Residues 140-161 (ANFEKRLTERPAAKGKMPATAE) form a disordered region. Positions 142–151 (FEKRLTERPA) are enriched in basic and acidic residues.

The protein belongs to the CpxP/Spy family. Homodimer.

Its subcellular location is the periplasm. Its function is as follows. An ATP-independent periplasmic chaperone, decreases protein aggregation and helps protein refolding. Binds substrate over a large region of its convex inner surface. Substrate protein folds while it is bound to chaperone. Increasing Spy flexibility increases its substrate affinity and overall chaperone activity (shown for 3 different substrates). Protects proteins in vitro against tannin inactivation; tannins have antimicrobial activity. Overexpression enhances the stability of otherwise unstable periplasmic proteins. This chain is Periplasmic chaperone Spy, found in Escherichia coli (strain K12).